The primary structure comprises 103 residues: Large ribosomal subunit protein bL21 (103 aa).

It belongs to the bacterial ribosomal protein bL21 family. Part of the 50S ribosomal subunit. Contacts protein L20.

In terms of biological role, this protein binds to 23S rRNA in the presence of protein L20. This chain is Large ribosomal subunit protein bL21, found in Polynucleobacter necessarius subsp. necessarius (strain STIR1).